We begin with the raw amino-acid sequence, 426 residues long: Cdc25-like protein phosphatase twine (426 aa).

The segment at 1–27 is disordered; sequence MASKRLMLDVEEEDDESGACGQENFDP. Residues 265–371 form the Rhodanese domain; the sequence is SQGGYEIIDC…FFGLYSQLCQ (107 aa). Cys-318 is a catalytic residue.

The protein belongs to the MPI phosphatase family. In terms of tissue distribution, expressed in developing male and female germ cells.

It catalyses the reaction O-phospho-L-tyrosyl-[protein] + H2O = L-tyrosyl-[protein] + phosphate. In terms of biological role, required during meiosis. Regulates the transition from the extended G2 phase to the onset of the first meiotic division. This is Cdc25-like protein phosphatase twine (twe) from Drosophila melanogaster (Fruit fly).